Reading from the N-terminus, the 291-residue chain is ATP synthase gamma chain (291 aa).

This sequence belongs to the ATPase gamma chain family. As to quaternary structure, F-type ATPases have 2 components, CF(1) - the catalytic core - and CF(0) - the membrane proton channel. CF(1) has five subunits: alpha(3), beta(3), gamma(1), delta(1), epsilon(1). CF(0) has three main subunits: a, b and c.

It is found in the cell inner membrane. In terms of biological role, produces ATP from ADP in the presence of a proton gradient across the membrane. The gamma chain is believed to be important in regulating ATPase activity and the flow of protons through the CF(0) complex. This is ATP synthase gamma chain from Syntrophus aciditrophicus (strain SB).